The following is a 236-amino-acid chain: Eukaryotic translation initiation factor 3 subunit J (236 aa).

Disordered stretches follow at residues 1–88 (MADD…LANM) and 188–236 (SEKQ…DDFM). Residues 28-46 (GEDDDEDVKESWEDEEEKK) show a composition bias toward acidic residues. 3 stretches are compositionally biased toward basic and acidic residues: residues 47–58 (DEEKPTKTEAPV), 68–88 (AKLE…LANM), and 188–197 (SEKQKMEKAN). 2 coiled-coil regions span residues 61–112 (KPNK…LKSA) and 174–209 (ADIK…KGKV). A compositionally biased stretch (basic residues) spans 201–210 (SAAKAKGKVS).

Belongs to the eIF-3 subunit J family. Component of the eukaryotic translation initiation factor 3 (eIF-3) complex. The eIF-3 complex interacts with pix.

The protein resides in the cytoplasm. In terms of biological role, component of the eukaryotic translation initiation factor 3 (eIF-3) complex, which is involved in protein synthesis of a specialized repertoire of mRNAs and, together with other initiation factors, stimulates binding of mRNA and methionyl-tRNAi to the 40S ribosome. The eIF-3 complex specifically targets and initiates translation of a subset of mRNAs involved in cell proliferation. The sequence is that of Eukaryotic translation initiation factor 3 subunit J from Drosophila virilis (Fruit fly).